The sequence spans 149 residues: Glutamate mutase sigma subunit (149 aa).

One can recognise a B12-binding domain in the interval 5–138 (DPTVVLGTIG…DAVKTELDVD (134 aa)). Residues 15–19 (SDAHA), His18, 63–65 (SSL), and 94–98 (NLAVG) each bind adenosylcob(III)alamin.

The protein belongs to the methylaspartate mutase GlmS subunit family. As to quaternary structure, heterotetramer composed of 2 epsilon subunits (GlmE) and 2 sigma subunits (GlmS). GlmE exists as a homodimer and GlmS as a monomer. Requires adenosylcob(III)alamin as cofactor.

It catalyses the reaction (2S,3S)-3-methyl-L-aspartate = L-glutamate. It functions in the pathway amino-acid degradation; L-glutamate degradation via mesaconate pathway; acetate and pyruvate from L-glutamate: step 1/4. Its function is as follows. Catalyzes the carbon skeleton rearrangement of L-glutamate to L-threo-3-methylaspartate ((2S,3S)-3-methylaspartate). The chain is Glutamate mutase sigma subunit from Halobacterium salinarum (strain ATCC 700922 / JCM 11081 / NRC-1) (Halobacterium halobium).